The chain runs to 31 residues: Cytochrome b6-f complex subunit 6 (31 aa).

A helical membrane pass occupies residues 4–26 (ITSYFGFLLAASTITPALFIGLS).

This sequence belongs to the PetL family. In terms of assembly, the 4 large subunits of the cytochrome b6-f complex are cytochrome b6, subunit IV (17 kDa polypeptide, PetD), cytochrome f and the Rieske protein, while the 4 small subunits are PetG, PetL, PetM and PetN. The complex functions as a dimer.

It is found in the plastid. The protein resides in the chloroplast thylakoid membrane. In terms of biological role, component of the cytochrome b6-f complex, which mediates electron transfer between photosystem II (PSII) and photosystem I (PSI), cyclic electron flow around PSI, and state transitions. PetL is important for photoautotrophic growth as well as for electron transfer efficiency and stability of the cytochrome b6-f complex. The polypeptide is Cytochrome b6-f complex subunit 6 (Buxus microphylla (Littleleaf boxwood)).